The chain runs to 491 residues: Probable glycine dehydrogenase (decarboxylating) subunit 2 (491 aa).

Position 273 is an N6-(pyridoxal phosphate)lysine (lysine 273).

It belongs to the GcvP family. C-terminal subunit subfamily. As to quaternary structure, the glycine cleavage system is composed of four proteins: P, T, L and H. In this organism, the P 'protein' is a heterodimer of two subunits. It depends on pyridoxal 5'-phosphate as a cofactor.

The catalysed reaction is N(6)-[(R)-lipoyl]-L-lysyl-[glycine-cleavage complex H protein] + glycine + H(+) = N(6)-[(R)-S(8)-aminomethyldihydrolipoyl]-L-lysyl-[glycine-cleavage complex H protein] + CO2. The glycine cleavage system catalyzes the degradation of glycine. The P protein binds the alpha-amino group of glycine through its pyridoxal phosphate cofactor; CO(2) is released and the remaining methylamine moiety is then transferred to the lipoamide cofactor of the H protein. This chain is Probable glycine dehydrogenase (decarboxylating) subunit 2, found in Bacillus cytotoxicus (strain DSM 22905 / CIP 110041 / 391-98 / NVH 391-98).